Consider the following 350-residue polypeptide: MEVRHNWTVAEVQTLMDKPFMDLIFEAQLVHRKYQQANHVQVSTLLSIKTGACPEDCKYCPQSAHYRTDVDRERLMEVESVLDAAKKAKNSGSTRFCMGAAWKNPKERDMPYLLDMIKGVKEMGLETCMTLGMITADQAGELSEAGLDYYNHNLDTSPEFYGNIITTRTYQDRLDTLSHVRDAGMKICSGGIIGMGESASDRAGLFVELANLPQHPESVPVNMLVKVKGTPLEDAEDVDPFDFIRLIAVARIMMPESAVRLSAGRESMNEQMQALCFMAGANSVFYGCKLLTTPNPDEDTDMQLFKKLGVNSEQVAQKPDQIQEHELLDRVAERVAARPNKDDLFYEASV.

The Radical SAM core domain maps to 38–256; it reads NHVQVSTLLS…IAVARIMMPE (219 aa). Residues Cys-53, Cys-57, and Cys-60 each contribute to the [4Fe-4S] cluster site. The [2Fe-2S] cluster site is built by Cys-97, Cys-128, Cys-188, and Arg-260.

This sequence belongs to the radical SAM superfamily. Biotin synthase family. In terms of assembly, homodimer. It depends on [4Fe-4S] cluster as a cofactor. [2Fe-2S] cluster is required as a cofactor.

It carries out the reaction (4R,5S)-dethiobiotin + (sulfur carrier)-SH + 2 reduced [2Fe-2S]-[ferredoxin] + 2 S-adenosyl-L-methionine = (sulfur carrier)-H + biotin + 2 5'-deoxyadenosine + 2 L-methionine + 2 oxidized [2Fe-2S]-[ferredoxin]. It functions in the pathway cofactor biosynthesis; biotin biosynthesis; biotin from 7,8-diaminononanoate: step 2/2. Functionally, catalyzes the conversion of dethiobiotin (DTB) to biotin by the insertion of a sulfur atom into dethiobiotin via a radical-based mechanism. This is Biotin synthase from Aliivibrio fischeri (strain ATCC 700601 / ES114) (Vibrio fischeri).